Reading from the N-terminus, the 608-residue chain is Glutamine--fructose-6-phosphate aminotransferase [isomerizing] (608 aa).

The active-site Nucleophile; for GATase activity is the cysteine 2. The Glutamine amidotransferase type-2 domain occupies 2–218 (CGICGIVGHQ…DGDWCELTPD (217 aa)). SIS domains are found at residues 284-423 (MPFD…ARGT) and 456-598 (MAAV…VDQP). The active-site For Fru-6P isomerization activity is lysine 603.

In terms of assembly, homodimer.

The protein localises to the cytoplasm. It catalyses the reaction D-fructose 6-phosphate + L-glutamine = D-glucosamine 6-phosphate + L-glutamate. Its function is as follows. Catalyzes the first step in hexosamine metabolism, converting fructose-6P into glucosamine-6P using glutamine as a nitrogen source. The protein is Glutamine--fructose-6-phosphate aminotransferase [isomerizing] of Gluconobacter oxydans (strain 621H) (Gluconobacter suboxydans).